The sequence spans 548 residues: Chaperonin GroEL (548 aa).

ATP contacts are provided by residues Thr30 to Pro33, Lys51, Asp87 to Thr91, Gly415, and Asp495.

The protein belongs to the chaperonin (HSP60) family. As to quaternary structure, forms a cylinder of 14 subunits composed of two heptameric rings stacked back-to-back. Interacts with the co-chaperonin GroES.

The protein resides in the cytoplasm. The catalysed reaction is ATP + H2O + a folded polypeptide = ADP + phosphate + an unfolded polypeptide.. Its function is as follows. Together with its co-chaperonin GroES, plays an essential role in assisting protein folding. The GroEL-GroES system forms a nano-cage that allows encapsulation of the non-native substrate proteins and provides a physical environment optimized to promote and accelerate protein folding. The chain is Chaperonin GroEL from Erwinia tasmaniensis (strain DSM 17950 / CFBP 7177 / CIP 109463 / NCPPB 4357 / Et1/99).